The following is a 198-amino-acid chain: MRLCDKDIEQYLDDEKIIIEPKPDSSMISGVSVDIRLGNEFRVFQDHTAPYIDLSAPKGEVQEAMNSIMSDEIFIADGDAFFLHPGELALAVTYESVTLPDNIVGWLDGRSSLARLGLMVHVTAHRIDPGWSGQIVLEFYNSGKLPLALRPKMKIAALNFETMSSSAARPYNKREDAKYRDQKGAVASRISQDEKVNK.

DCTP contacts are provided by residues 110–115, aspartate 128, 136–138, tyrosine 171, lysine 178, and glutamine 182; these read RSSLAR and VLE. Glutamate 138 (proton donor/acceptor) is an active-site residue. The interval 168–198 is disordered; it reads ARPYNKREDAKYRDQKGAVASRISQDEKVNK. The span at 172 to 183 shows a compositional bias: basic and acidic residues; sequence NKREDAKYRDQK.

Belongs to the dCTP deaminase family. In terms of assembly, homotrimer.

It catalyses the reaction dCTP + H2O + H(+) = dUTP + NH4(+). The protein operates within pyrimidine metabolism; dUMP biosynthesis; dUMP from dCTP (dUTP route): step 1/2. Functionally, catalyzes the deamination of dCTP to dUTP. This is dCTP deaminase from Colwellia psychrerythraea (strain 34H / ATCC BAA-681) (Vibrio psychroerythus).